The sequence spans 155 residues: Endoribonuclease YbeY (155 aa).

The Zn(2+) site is built by His-114, His-118, and His-124.

Belongs to the endoribonuclease YbeY family. Zn(2+) serves as cofactor.

It is found in the cytoplasm. Its function is as follows. Single strand-specific metallo-endoribonuclease involved in late-stage 70S ribosome quality control and in maturation of the 3' terminus of the 16S rRNA. The chain is Endoribonuclease YbeY from Buchnera aphidicola subsp. Acyrthosiphon pisum (strain APS) (Acyrthosiphon pisum symbiotic bacterium).